A 441-amino-acid polypeptide reads, in one-letter code: D-inositol 3-phosphate glycosyltransferase (441 aa).

Histidine 38 contacts 1D-myo-inositol 3-phosphate. UDP-N-acetyl-alpha-D-glucosamine contacts are provided by residues 44 to 45 (QP) and glycine 52. 1D-myo-inositol 3-phosphate-binding positions include 49–54 (DAGGMN), lysine 107, tyrosine 140, threonine 164, and arginine 184. UDP-N-acetyl-alpha-D-glucosamine-binding residues include arginine 258, lysine 263, and glutamine 316. 3 residues coordinate Mg(2+): phenylalanine 325, glutamine 326, and alanine 328. UDP-N-acetyl-alpha-D-glucosamine contacts are provided by glutamate 338 and glutamate 346. Threonine 352 is a binding site for Mg(2+).

It belongs to the glycosyltransferase group 1 family. MshA subfamily. As to quaternary structure, homodimer.

The enzyme catalyses 1D-myo-inositol 3-phosphate + UDP-N-acetyl-alpha-D-glucosamine = 1D-myo-inositol 2-acetamido-2-deoxy-alpha-D-glucopyranoside 3-phosphate + UDP + H(+). In terms of biological role, catalyzes the transfer of a N-acetyl-glucosamine moiety to 1D-myo-inositol 3-phosphate to produce 1D-myo-inositol 2-acetamido-2-deoxy-glucopyranoside 3-phosphate in the mycothiol biosynthesis pathway. The sequence is that of D-inositol 3-phosphate glycosyltransferase from Mycolicibacterium paratuberculosis (strain ATCC BAA-968 / K-10) (Mycobacterium paratuberculosis).